The chain runs to 468 residues: Putative magnesium transporter MRS2-G (468 aa).

Disordered regions lie at residues 1–76 (MGRR…AGKV) and 182–205 (NGQP…VPRL). Low complexity-rich tracts occupy residues 14-23 (ASNASTSSST) and 31-45 (RLPS…SSPS). A compositionally biased stretch (pro residues) spans 46-67 (PASPSPPPPSASHPAPPSPPLA). A compositionally biased stretch (basic and acidic residues) spans 187–197 (GDDHGEKHDDS). The next 2 membrane-spanning stretches (helical) occupy residues 402–422 (LTLT…GAFA) and 437–457 (FFWP…IVLL).

It belongs to the CorA metal ion transporter (MIT) (TC 1.A.35.5) family.

Its subcellular location is the membrane. Functionally, putative magnesium transporter. The chain is Putative magnesium transporter MRS2-G (MRS2-G) from Oryza sativa subsp. indica (Rice).